The following is a 475-amino-acid chain: NADH-ubiquinone oxidoreductase chain 2 (475 aa).

13 helical membrane-spanning segments follow: residues 45–65 (LAVL…GIQY), 82–102 (APIV…LTTT), 112–132 (IALL…VNDL), 133–153 (IPLY…TGVY), 162–182 (AAIL…LSSA), 198–220 (TYYS…ALVF), 240–260 (LYIT…FIYL), 262–282 (IHLF…AVAA), 291–311 (IKSI…TAVL), 318–338 (YIYI…ILAI), 365–385 (LCIA…LPGF), 402–422 (LEAL…AYII), and 447–467 (FIIS…PTLL).

This sequence belongs to the complex I subunit 2 family.

It localises to the mitochondrion inner membrane. The catalysed reaction is a ubiquinone + NADH + 5 H(+)(in) = a ubiquinol + NAD(+) + 4 H(+)(out). In terms of biological role, core subunit of the mitochondrial membrane respiratory chain NADH dehydrogenase (Complex I) that is believed to belong to the minimal assembly required for catalysis. Complex I functions in the transfer of electrons from NADH to the respiratory chain. The immediate electron acceptor for the enzyme is believed to be ubiquinone. The protein is NADH-ubiquinone oxidoreductase chain 2 (NAD2) of Candida albicans (strain SC5314 / ATCC MYA-2876) (Yeast).